The chain runs to 751 residues: SKI family transcriptional corepressor 1 homolog-B (751 aa).

Disordered stretches follow at residues 1–30, 234–267, 386–434, 459–569, and 600–635; these read MESI…SGPP, SRKR…PHKT, LDVS…GIPP, YGNR…HGNK, and QRET…SEER. Composition is skewed to polar residues over residues 14–27 and 244–259; these read SSCS…QSYS and SESS…TQGE. Over residues 416–428 the composition is skewed to basic and acidic residues; it reads RNEEDKSGDESRS. Positions 479–491 are enriched in low complexity; sequence SESSSYRSVSPDV. The span at 539–558 shows a compositional bias: polar residues; the sequence is QENTQMHTLNDLHSTNSSET. Basic and acidic residues-rich tracts occupy residues 559-569, 603-612, and 620-635; these read RPSDMESHGNK, TSVKDVHEEE, and MEPK…SEER. The stretch at 666–704 forms a coiled coil; it reads SMAKEELQKQLVEQVELRKKLEREFQNLKDSFQDQMKRE.

It belongs to the SKI family.

The protein localises to the nucleus. Functionally, may inhibit BMP signaling. The protein is SKI family transcriptional corepressor 1 homolog-B (skor1b) of Danio rerio (Zebrafish).